The sequence spans 122 residues: Large ribosomal subunit protein uL14 (122 aa).

This sequence belongs to the universal ribosomal protein uL14 family. As to quaternary structure, part of the 50S ribosomal subunit. Forms a cluster with proteins L3 and L19. In the 70S ribosome, L14 and L19 interact and together make contacts with the 16S rRNA in bridges B5 and B8.

Binds to 23S rRNA. Forms part of two intersubunit bridges in the 70S ribosome. This is Large ribosomal subunit protein uL14 from Bacillus anthracis (strain A0248).